We begin with the raw amino-acid sequence, 28 residues long: Metallothionein-like protein type 2 LSC210 (28 aa).

This sequence belongs to the metallothionein superfamily. Type 15 family.

In terms of biological role, metallothioneins have a high content of cysteine residues that bind various heavy metals. This is Metallothionein-like protein type 2 LSC210 (LSC210) from Brassica napus (Rape).